The following is a 38-amino-acid chain: Large ribosomal subunit protein bL36c (38 aa).

This sequence belongs to the bacterial ribosomal protein bL36 family.

It localises to the plastid. Its subcellular location is the chloroplast. This Mesostigma viride (Green alga) protein is Large ribosomal subunit protein bL36c (rpl36).